A 142-amino-acid polypeptide reads, in one-letter code: Small ribosomal subunit protein uS9 (142 aa).

Belongs to the universal ribosomal protein uS9 family.

The polypeptide is Small ribosomal subunit protein uS9 (RPS16) (Debaryomyces hansenii (strain ATCC 36239 / CBS 767 / BCRC 21394 / JCM 1990 / NBRC 0083 / IGC 2968) (Yeast)).